Here is a 101-residue protein sequence, read N- to C-terminus: A-type ATP synthase subunit K (101 aa).

3 consecutive transmembrane segments (helical) span residues 4-24 (ALLI…AAQA), 32-52 (FMGI…GAGV), and 75-95 (VLIF…FAVL).

Belongs to the V-ATPase proteolipid subunit family. As to quaternary structure, has multiple subunits with at least A(3), B(3), C, D, E, F, H, I and proteolipid K(x).

It localises to the cell membrane. Its function is as follows. Component of the A-type ATP synthase that produces ATP from ADP in the presence of a proton gradient across the membrane. The sequence is that of A-type ATP synthase subunit K from Sulfolobus acidocaldarius (strain ATCC 33909 / DSM 639 / JCM 8929 / NBRC 15157 / NCIMB 11770).